The chain runs to 159 residues: Transmembrane protein 42 (159 aa).

4 helical membrane-spanning segments follow: residues 37–57 (FWGV…AASA), 59–79 (LAFG…VMAS), 100–120 (IASV…GYVL), and 124–144 (CQEV…TLIH).

The protein localises to the membrane. In Pongo abelii (Sumatran orangutan), this protein is Transmembrane protein 42 (TMEM42).